Consider the following 240-residue polypeptide: Large ribosomal subunit protein uL3 (240 aa).

2 disordered regions span residues 138–158 (SISHRSHGSTGGRQDPGKTFK) and 215–240 (EAPLPGKFRLANEGAEPAPATESAEG). Gln151 is modified (N5-methylglutamine).

It belongs to the universal ribosomal protein uL3 family. Part of the 50S ribosomal subunit. Forms a cluster with proteins L14 and L19. Post-translationally, methylated by PrmB.

One of the primary rRNA binding proteins, it binds directly near the 3'-end of the 23S rRNA, where it nucleates assembly of the 50S subunit. The polypeptide is Large ribosomal subunit protein uL3 (Beijerinckia indica subsp. indica (strain ATCC 9039 / DSM 1715 / NCIMB 8712)).